A 346-amino-acid polypeptide reads, in one-letter code: Uroporphyrinogen decarboxylase (346 aa).

Substrate-binding positions include 26-30 (RQAGR), phenylalanine 45, aspartate 76, tyrosine 153, serine 208, and histidine 323.

The protein belongs to the uroporphyrinogen decarboxylase family. As to quaternary structure, homodimer.

Its subcellular location is the cytoplasm. It carries out the reaction uroporphyrinogen III + 4 H(+) = coproporphyrinogen III + 4 CO2. It participates in porphyrin-containing compound metabolism; protoporphyrin-IX biosynthesis; coproporphyrinogen-III from 5-aminolevulinate: step 4/4. In terms of biological role, catalyzes the decarboxylation of four acetate groups of uroporphyrinogen-III to yield coproporphyrinogen-III. This is Uroporphyrinogen decarboxylase from Prochlorococcus marinus subsp. pastoris (strain CCMP1986 / NIES-2087 / MED4).